The chain runs to 535 residues: Light-independent protochlorophyllide reductase subunit B (535 aa).

D36 serves as a coordination point for [4Fe-4S] cluster. The Proton donor role is filled by D292. 428–429 (GL) contacts substrate. The segment at 447 to 483 (SDDAAKAEPDQPVSNAHGHTESKTVSQGEPIASDEGG) is disordered.

Belongs to the ChlB/BchB/BchZ family. In terms of assembly, protochlorophyllide reductase is composed of three subunits; BchL, BchN and BchB. Forms a heterotetramer of two BchB and two BchN subunits. Requires [4Fe-4S] cluster as cofactor.

It catalyses the reaction chlorophyllide a + oxidized 2[4Fe-4S]-[ferredoxin] + 2 ADP + 2 phosphate = protochlorophyllide a + reduced 2[4Fe-4S]-[ferredoxin] + 2 ATP + 2 H2O. It participates in porphyrin-containing compound metabolism; bacteriochlorophyll biosynthesis (light-independent). In terms of biological role, component of the dark-operative protochlorophyllide reductase (DPOR) that uses Mg-ATP and reduced ferredoxin to reduce ring D of protochlorophyllide (Pchlide) to form chlorophyllide a (Chlide). This reaction is light-independent. The NB-protein (BchN-BchB) is the catalytic component of the complex. This chain is Light-independent protochlorophyllide reductase subunit B, found in Chlorobium phaeobacteroides (strain DSM 266 / SMG 266 / 2430).